The chain runs to 916 residues: Translation initiation factor IF-2 (916 aa).

The disordered stretch occupies residues 55 to 324 (EPKAVTPTSK…NHNANLKPVT (270 aa)). Residues 77–88 (AAEPKAAATKPA) are compositionally biased toward low complexity. Basic and acidic residues-rich tracts occupy residues 98–121 (FKAEREARAKAEAERRQNNGERRN), 129–161 (RQKDNRNHGSQDRRNDNRNNRNRQNDNRRDNRN), and 198–212 (RQSETRFHEAQEAKR). Positions 227-250 (KEQPTVEAAATAAPQAQPQTVEQV) are enriched in low complexity. The segment covering 264-281 (ARPDKSRDFSHENEDGPK) has biased composition (basic and acidic residues). Positions 291–304 (KQNQVRNQKNSNWN) are enriched in low complexity. Basic residues predominate over residues 305–314 (KKNKKSKNNR). The region spanning 418–585 (ERAPVVTIMG…TVLLVAEIQE (168 aa)) is the tr-type G domain. Residues 427-434 (GHVDHGKT) are G1. 427-434 (GHVDHGKT) is a GTP binding site. Residues 452-456 (GITQH) are G2. The segment at 473-476 (DTPG) is G3. Residues 473–477 (DTPGH) and 527–530 (NKID) each bind GTP. A G4 region spans residues 527-530 (NKID). The segment at 563–565 (SAK) is G5.

The protein belongs to the TRAFAC class translation factor GTPase superfamily. Classic translation factor GTPase family. IF-2 subfamily.

The protein resides in the cytoplasm. In terms of biological role, one of the essential components for the initiation of protein synthesis. Protects formylmethionyl-tRNA from spontaneous hydrolysis and promotes its binding to the 30S ribosomal subunits. Also involved in the hydrolysis of GTP during the formation of the 70S ribosomal complex. The chain is Translation initiation factor IF-2 from Streptococcus mutans serotype c (strain ATCC 700610 / UA159).